Consider the following 269-residue polypeptide: Shikimate dehydrogenase (NADP(+)) (269 aa).

Shikimate contacts are provided by residues 17–19 (SKS) and Thr-64. Lys-68 functions as the Proton acceptor in the catalytic mechanism. Glu-80 lines the NADP(+) pocket. Residues Asn-89 and Asp-105 each contribute to the shikimate site. Residues 130–134 (GAGGA), 154–159 (NRTHTK), and Met-213 each bind NADP(+). Position 215 (Tyr-215) interacts with shikimate. Gly-237 is a binding site for NADP(+).

The protein belongs to the shikimate dehydrogenase family. In terms of assembly, homodimer.

The enzyme catalyses shikimate + NADP(+) = 3-dehydroshikimate + NADPH + H(+). The protein operates within metabolic intermediate biosynthesis; chorismate biosynthesis; chorismate from D-erythrose 4-phosphate and phosphoenolpyruvate: step 4/7. Its function is as follows. Involved in the biosynthesis of the chorismate, which leads to the biosynthesis of aromatic amino acids. Catalyzes the reversible NADPH linked reduction of 3-dehydroshikimate (DHSA) to yield shikimate (SA). This chain is Shikimate dehydrogenase (NADP(+)), found in Neisseria mucosa.